The following is a 317-amino-acid chain: Anamorsin homolog (317 aa).

The N-terminal SAM-like domain stretch occupies residues 1 to 192 (MREVLVVSES…ITGVRPNWKA (192 aa)). Residues 193-216 (KGDRKSSSIHAAPIDGYISKAPDY) form a linker region. [2Fe-2S] cluster contacts are provided by Cys219, Cys226, Cys229, and Cys231. Residues 219–231 (CSTKPRACANCTC) form a fe-S binding site A region. 4 residues coordinate [4Fe-4S] cluster: Cys286, Cys289, Cys297, and Cys300. 2 consecutive short sequence motifs (cx2C motif) follow at residues 286-289 (CGNC) and 297-300 (CDSC). The segment at 286–300 (CGNCYLGDAFRCDSC) is fe-S binding site B.

Belongs to the anamorsin family. As to quaternary structure, monomer. It depends on [2Fe-2S] cluster as a cofactor. [4Fe-4S] cluster serves as cofactor.

Its subcellular location is the cytoplasm. It localises to the mitochondrion intermembrane space. In terms of biological role, component of the cytosolic iron-sulfur (Fe-S) protein assembly (CIA) machinery. Required for the maturation of extramitochondrial Fe-S proteins. Part of an electron transfer chain functioning in an early step of cytosolic Fe-S biogenesis, facilitating the de novo assembly of a [4Fe-4S] cluster on the cytosolic Fe-S scaffold complex. Electrons are transferred from NADPH via a FAD- and FMN-containing diflavin oxidoreductase. Together with the diflavin oxidoreductase, also required for the assembly of the diferric tyrosyl radical cofactor of ribonucleotide reductase (RNR), probably by providing electrons for reduction during radical cofactor maturation in the catalytic small subunit. This is Anamorsin homolog from Theileria parva (East coast fever infection agent).